Reading from the N-terminus, the 264-residue chain is Thymidylate synthase (264 aa).

Residue R21 participates in dUMP binding. (6R)-5,10-methylene-5,6,7,8-tetrahydrofolate is bound at residue H51. Residue 126 to 127 coordinates dUMP; sequence RR. C146 functions as the Nucleophile in the catalytic mechanism. Residues 166–169, N177, and 207–209 contribute to the dUMP site; these read RSAD and HLY. Residue D169 coordinates (6R)-5,10-methylene-5,6,7,8-tetrahydrofolate. A (6R)-5,10-methylene-5,6,7,8-tetrahydrofolate-binding site is contributed by A263.

It belongs to the thymidylate synthase family. Bacterial-type ThyA subfamily. In terms of assembly, homodimer.

Its subcellular location is the cytoplasm. It catalyses the reaction dUMP + (6R)-5,10-methylene-5,6,7,8-tetrahydrofolate = 7,8-dihydrofolate + dTMP. The protein operates within pyrimidine metabolism; dTTP biosynthesis. Functionally, catalyzes the reductive methylation of 2'-deoxyuridine-5'-monophosphate (dUMP) to 2'-deoxythymidine-5'-monophosphate (dTMP) while utilizing 5,10-methylenetetrahydrofolate (mTHF) as the methyl donor and reductant in the reaction, yielding dihydrofolate (DHF) as a by-product. This enzymatic reaction provides an intracellular de novo source of dTMP, an essential precursor for DNA biosynthesis. The polypeptide is Thymidylate synthase (Nitrosomonas eutropha (strain DSM 101675 / C91 / Nm57)).